The following is a 222-amino-acid chain: Deoxyribose-phosphate aldolase (222 aa).

D93 acts as the Proton donor/acceptor in catalysis. K156 acts as the Schiff-base intermediate with acetaldehyde in catalysis. The active-site Proton donor/acceptor is K186.

Belongs to the DeoC/FbaB aldolase family. DeoC type 1 subfamily.

It localises to the cytoplasm. It catalyses the reaction 2-deoxy-D-ribose 5-phosphate = D-glyceraldehyde 3-phosphate + acetaldehyde. It participates in carbohydrate degradation; 2-deoxy-D-ribose 1-phosphate degradation; D-glyceraldehyde 3-phosphate and acetaldehyde from 2-deoxy-alpha-D-ribose 1-phosphate: step 2/2. In terms of biological role, catalyzes a reversible aldol reaction between acetaldehyde and D-glyceraldehyde 3-phosphate to generate 2-deoxy-D-ribose 5-phosphate. The sequence is that of Deoxyribose-phosphate aldolase from Corynebacterium glutamicum (strain ATCC 13032 / DSM 20300 / JCM 1318 / BCRC 11384 / CCUG 27702 / LMG 3730 / NBRC 12168 / NCIMB 10025 / NRRL B-2784 / 534).